Here is a 485-residue protein sequence, read N- to C-terminus: Subtilisin-like protease 1 (485 aa).

The first 19 residues, 1-19 (MGIFRFISISLAAVSAANA), serve as a signal peptide directing secretion. The propeptide occupies 20–116 (GHILSMGHAK…VEPDTTITIH (97 aa)). Residues 34–116 (SYIVVMKDGT…VEPDTTITIH (83 aa)) form the Inhibitor I9 domain. The region spanning 126-400 (SWGLARISSQ…NILINNGDAK (275 aa)) is the Peptidase S8 domain. Catalysis depends on charge relay system residues Asp-158 and His-190. Asn-251 carries an N-linked (GlcNAc...) asparagine glycan. Ser-345 (charge relay system) is an active-site residue. The span at 377–394 (GTSSVTNPGPGTRTNILI) shows a compositional bias: polar residues. Residues 377–462 (GTSSVTNPGP…HTPFPNDDFN (86 aa)) form a disordered region. The segment covering 409-418 (PSQPPKPSQP) has biased composition (pro residues). The segment covering 419 to 428 (SKPQQPSEPQ) has biased composition (low complexity). Residues 433 to 455 (PQEPAPGQPAPAPAPVPQHPHTP) show a composition bias toward pro residues.

Belongs to the peptidase S8 family.

It localises to the secreted. Secreted subtilisin-like serine protease with keratinolytic activity that contributes to pathogenicity. This chain is Subtilisin-like protease 1 (SUB1), found in Arthroderma otae (Microsporum canis).